The following is a 97-amino-acid chain: Large ribosomal subunit protein bL28 (97 aa).

This sequence belongs to the bacterial ribosomal protein bL28 family.

The sequence is that of Large ribosomal subunit protein bL28 from Rickettsia typhi (strain ATCC VR-144 / Wilmington).